We begin with the raw amino-acid sequence, 128 residues long: Protein Wnt-10 (128 aa).

Cystine bridges form between C3–C17, C5–C12, C74–C105, C90–C100, and C127–C128. A lipid anchor (O-palmitoleoyl serine; by PORCN) is attached at S9. Residue N91 is glycosylated (N-linked (GlcNAc...) asparagine).

This sequence belongs to the Wnt family. Palmitoleoylation is required for efficient binding to frizzled receptors. Depalmitoleoylation leads to Wnt signaling pathway inhibition. As to expression, in embryo, in dorsal hindbrain; in adults, in brain.

It is found in the secreted. The protein resides in the extracellular space. Its subcellular location is the extracellular matrix. Functionally, ligand for members of the frizzled family of seven transmembrane receptors. Probable developmental protein. May be a signaling molecule which affects the development of discrete regions of tissues. Is likely to signal over only few cell diameters. This chain is Protein Wnt-10 (wnt10), found in Xenopus laevis (African clawed frog).